Here is a 110-residue protein sequence, read N- to C-terminus: uncharacterized protein (110 aa).

A run of 2 helical transmembrane segments spans residues 6 to 26 and 38 to 58; these read VSLY…IYNV and TSGP…IIGP.

It localises to the membrane. This is an uncharacterized protein from Saccharomyces cerevisiae (strain ATCC 204508 / S288c) (Baker's yeast).